A 594-amino-acid polypeptide reads, in one-letter code: DNA polymerase II small subunit (594 aa).

The protein belongs to the DNA polymerase delta/II small subunit family. As to quaternary structure, heterodimer of a large subunit and a small subunit.

It catalyses the reaction DNA(n) + a 2'-deoxyribonucleoside 5'-triphosphate = DNA(n+1) + diphosphate. The catalysed reaction is Exonucleolytic cleavage in the 3'- to 5'-direction to yield nucleoside 5'-phosphates.. In terms of biological role, possesses two activities: a DNA synthesis (polymerase) and an exonucleolytic activity that degrades single-stranded DNA in the 3' to 5' direction. Has a template-primer preference which is characteristic of a replicative DNA polymerase. The protein is DNA polymerase II small subunit (polB) of Methanocaldococcus jannaschii (strain ATCC 43067 / DSM 2661 / JAL-1 / JCM 10045 / NBRC 100440) (Methanococcus jannaschii).